Reading from the N-terminus, the 128-residue chain is Aspartate 1-decarboxylase (128 aa).

Catalysis depends on Ser-25, which acts as the Schiff-base intermediate with substrate; via pyruvic acid. Pyruvic acid (Ser) is present on Ser-25. Residue Thr-57 coordinates substrate. Catalysis depends on Tyr-58, which acts as the Proton donor. A substrate-binding site is contributed by 73-75 (GSA).

Belongs to the PanD family. As to quaternary structure, heterooctamer of four alpha and four beta subunits. It depends on pyruvate as a cofactor. In terms of processing, is synthesized initially as an inactive proenzyme, which is activated by self-cleavage at a specific serine bond to produce a beta-subunit with a hydroxyl group at its C-terminus and an alpha-subunit with a pyruvoyl group at its N-terminus.

It localises to the cytoplasm. It catalyses the reaction L-aspartate + H(+) = beta-alanine + CO2. The protein operates within cofactor biosynthesis; (R)-pantothenate biosynthesis; beta-alanine from L-aspartate: step 1/1. Functionally, catalyzes the pyruvoyl-dependent decarboxylation of aspartate to produce beta-alanine. This is Aspartate 1-decarboxylase from Burkholderia pseudomallei (strain 668).